A 515-amino-acid polypeptide reads, in one-letter code: Cytidine and dCMP deaminase domain-containing protein 1 (515 aa).

2 stretches are compositionally biased toward polar residues: residues 1 to 11 (MKEAGQMQNLE) and 18 to 27 (SVSTQTGSMT). Disordered regions lie at residues 1-27 (MKEA…GSMT) and 56-83 (RQKS…STDK). Basic and acidic residues predominate over residues 60–83 (QKNEEGKHGPLGDNEEMTRVSTDK). Positions 71 to 169 (GDNEEMTRVS…SLLTEASSSE (99 aa)) constitute a CMP/dCMP-type deaminase 1 domain. Residues H110, C135, and C138 each contribute to the Zn(2+) site. The Nuclear export signal motif lies at 272–284 (NLRQNMKDLILLL). The region spanning 318-483 (EIARHCMVQA…LNPSEAYGLE (166 aa)) is the CMP/dCMP-type deaminase 2 domain. H399 provides a ligand contact to Zn(2+). E401 functions as the Proton donor in the catalytic mechanism. The Zn(2+) site is built by C427 and C430. A disordered region spans residues 481–515 (GLEQNEPERRENGVLRPVPQKEEQHQDKKLRLGIH). Residues 486–515 (EPERRENGVLRPVPQKEEQHQDKKLRLGIH) show a composition bias toward basic and acidic residues. The Bipartite nuclear localization signal motif lies at 489 to 511 (RRENGVLRPVPQKEEQHQDKKLR).

The protein belongs to the cytidine and deoxycytidylate deaminase family. Requires Zn(2+) as cofactor.

It localises to the cytoplasm. The protein resides in the nucleus. It carries out the reaction 2'-deoxycytidine + H2O + H(+) = 2'-deoxyuridine + NH4(+). The catalysed reaction is cytidine + H2O + H(+) = uridine + NH4(+). In terms of biological role, catalyzes the deamination of cytidine and deoxycytidine into uridine and deoxyuridine, respectively. May play an important role in testicular development and spermatogenesis. The chain is Cytidine and dCMP deaminase domain-containing protein 1 (CDADC1) from Macaca fascicularis (Crab-eating macaque).